The primary structure comprises 358 residues: Aromatic amino acid aminotransferase (358 aa).

N6-(pyridoxal phosphate)lysine is present on Lys214.

The protein belongs to the class-II pyridoxal-phosphate-dependent aminotransferase family. In terms of assembly, homodimer. Pyridoxal 5'-phosphate is required as a cofactor.

It carries out the reaction an aromatic L-alpha-amino acid + 2-oxoglutarate = an aromatic oxo-acid + L-glutamate. Functionally, aminotransferase that catalyzes the conversion of aromatic amino acids and 2-oxoglutarate into corresponding aromatic oxo acids and L-glutamate. The sequence is that of Aromatic amino acid aminotransferase from Rhodococcus jostii (strain RHA1).